The primary structure comprises 131 residues: ATP synthase epsilon chain (131 aa).

Belongs to the ATPase epsilon chain family. F-type ATPases have 2 components, CF(1) - the catalytic core - and CF(0) - the membrane proton channel. CF(1) has five subunits: alpha(3), beta(3), gamma(1), delta(1), epsilon(1). CF(0) has three main subunits: a, b and c.

It is found in the cell membrane. Functionally, produces ATP from ADP in the presence of a proton gradient across the membrane. This is ATP synthase epsilon chain from Bacillus pumilus (strain SAFR-032).